Reading from the N-terminus, the 81-residue chain is Translational regulator CsrA (81 aa).

It belongs to the CsrA/RsmA family. In terms of assembly, homodimer; the beta-strands of each monomer intercalate to form a hydrophobic core, while the alpha-helices form wings that extend away from the core.

The protein resides in the cytoplasm. Functionally, a translational regulator that binds mRNA to regulate translation initiation and/or mRNA stability. Usually binds in the 5'-UTR at or near the Shine-Dalgarno sequence preventing ribosome-binding, thus repressing translation. Its main target seems to be the major flagellin gene, while its function is anatagonized by FliW. The polypeptide is Translational regulator CsrA (Halothermothrix orenii (strain H 168 / OCM 544 / DSM 9562)).